A 320-amino-acid chain; its full sequence is Acetyl-coenzyme A carboxylase carboxyl transferase subunit alpha (320 aa).

The region spanning 41-295 is the CoA carboxyltransferase C-terminal domain; the sequence is KIEEKAQQAL…GDAIAAAFAE (255 aa).

Belongs to the AccA family. In terms of assembly, acetyl-CoA carboxylase is a heterohexamer composed of biotin carboxyl carrier protein (AccB), biotin carboxylase (AccC) and two subunits each of ACCase subunit alpha (AccA) and ACCase subunit beta (AccD).

The protein localises to the cytoplasm. It carries out the reaction N(6)-carboxybiotinyl-L-lysyl-[protein] + acetyl-CoA = N(6)-biotinyl-L-lysyl-[protein] + malonyl-CoA. Its pathway is lipid metabolism; malonyl-CoA biosynthesis; malonyl-CoA from acetyl-CoA: step 1/1. Functionally, component of the acetyl coenzyme A carboxylase (ACC) complex. First, biotin carboxylase catalyzes the carboxylation of biotin on its carrier protein (BCCP) and then the CO(2) group is transferred by the carboxyltransferase to acetyl-CoA to form malonyl-CoA. The sequence is that of Acetyl-coenzyme A carboxylase carboxyl transferase subunit alpha from Rhodopseudomonas palustris (strain ATCC BAA-98 / CGA009).